The following is a 157-amino-acid chain: Small ribosomal subunit protein uS7 (157 aa).

This sequence belongs to the universal ribosomal protein uS7 family. As to quaternary structure, part of the 30S ribosomal subunit. Contacts proteins S9 and S11.

One of the primary rRNA binding proteins, it binds directly to 16S rRNA where it nucleates assembly of the head domain of the 30S subunit. Is located at the subunit interface close to the decoding center, probably blocks exit of the E-site tRNA. This Leptospira biflexa serovar Patoc (strain Patoc 1 / Ames) protein is Small ribosomal subunit protein uS7.